The sequence spans 442 residues: Histidine--tRNA ligase (442 aa).

The protein belongs to the class-II aminoacyl-tRNA synthetase family. As to quaternary structure, homodimer.

Its subcellular location is the cytoplasm. It catalyses the reaction tRNA(His) + L-histidine + ATP = L-histidyl-tRNA(His) + AMP + diphosphate + H(+). In Treponema pallidum (strain Nichols), this protein is Histidine--tRNA ligase (hisS).